Consider the following 215-residue polypeptide: ATP-dependent Clp protease proteolytic subunit 1 (215 aa).

The active-site Nucleophile is the Ser111. His136 is an active-site residue.

Belongs to the peptidase S14 family. In terms of assembly, fourteen ClpP subunits assemble into 2 heptameric rings which stack back to back to give a disk-like structure with a central cavity, resembling the structure of eukaryotic proteasomes.

Its subcellular location is the cytoplasm. It carries out the reaction Hydrolysis of proteins to small peptides in the presence of ATP and magnesium. alpha-casein is the usual test substrate. In the absence of ATP, only oligopeptides shorter than five residues are hydrolyzed (such as succinyl-Leu-Tyr-|-NHMec, and Leu-Tyr-Leu-|-Tyr-Trp, in which cleavage of the -Tyr-|-Leu- and -Tyr-|-Trp bonds also occurs).. In terms of biological role, cleaves peptides in various proteins in a process that requires ATP hydrolysis. Has a chymotrypsin-like activity. Plays a major role in the degradation of misfolded proteins. This chain is ATP-dependent Clp protease proteolytic subunit 1, found in Gluconobacter oxydans (strain 621H) (Gluconobacter suboxydans).